The sequence spans 320 residues: Ubiquinone biosynthesis protein COQ4, mitochondrial (320 aa).

Residues 1–31 (MFARSALGRSDQLVTALNSQKRQFVLTAATT) constitute a mitochondrion transit peptide. Residues H205, D206, H209, and E221 each coordinate Zn(2+).

It belongs to the COQ4 family. Component of a multi-subunit COQ enzyme complex, composed of at least COQ3, COQ4, COQ5, COQ6, COQ7 and COQ9. Zn(2+) is required as a cofactor.

It localises to the mitochondrion inner membrane. The catalysed reaction is a 4-hydroxy-3-methoxy-5-(all-trans-polyprenyl)benzoate + H(+) = a 2-methoxy-6-(all-trans-polyprenyl)phenol + CO2. It functions in the pathway cofactor biosynthesis; ubiquinone biosynthesis. Its function is as follows. Lyase that catalyzes the C1-decarboxylation of 4-hydroxy-3-methoxy-5-(all-trans-polyprenyl)benzoic acid into 2-methoxy-6-(all-trans-polyprenyl)phenol during ubiquinone biosynthesis. The polypeptide is Ubiquinone biosynthesis protein COQ4, mitochondrial (Scheffersomyces stipitis (strain ATCC 58785 / CBS 6054 / NBRC 10063 / NRRL Y-11545) (Yeast)).